A 1403-amino-acid chain; its full sequence is Perilipin-4 (1403 aa).

The interval 1 to 21 (MSASGDGTRVPPKSKGKTLSS) is disordered. S25 and S31 each carry phosphoserine. Positions 33–70 (RNLVSHTHSSTSTKDLQTATDPSGTPAPSSKVSTNSQM) are disordered. A run of 29 repeats spans residues 104-136 (GVFGIMDAAKGMVQGGLGATQSALVGTKEAVSG), 137-169 (GVMGAVGVAKGLVKGGLDTSKNVLTNTKDTVTT), 170-202 (GVMGAANMAKGTVQTGLDTTKSVVMGTKDTVAT), 203-235 (GLAGAVNVAKGTIQGGLDTTKSVVMGTKDTVTT), 236-268 (GLTGAVNVAKGVVQGGLDTTKSVVMGTKDTVTT), 269-301 (GLTGAMNVAKGTAQMGIDTSKTVLTGTKDTVCA), 302-334 (GATGAINVAKGAAQGGLDTTKSVLIGTKDTVTT), 335-367 (GLTGAVNVAKGAVQGGLDTTKSVVMGTKDTVTT), 368-400 (GLTGAMNVAKGTAQMGLGTSKTVLTGTKDTVCA), 401-433 (GLTGAINVAKGAAQGGLDTTKSVLMGTKDTVTT), 434-466 (GLTGAVNVAKGTIQGGLDTTKSVVMGTKDTVTT), 467-499 (GLTGAVNVAKGTIQGGLDTTKSVVMGTKDTVTT), 500-532 (GLTGAVNVAKGAAQGGLDTTKSVVMGTKDTVTT), 533-565 (GLTGAMNVAKGTAQMGLGTSKTVLTGTKDTVCA), 566-598 (GLTGAINVAKGAAQGGLDTTKSVLMGTKDTVTT), 599-631 (GLTGAVNVAKGTIQGGLDTTKSVVMGTKDTVTT), 632-664 (GLTGAVNVAKGAVQGGLDTTKSVVMGTKDTVTT), 665-697 (GLTGALNVAKGTAQMGIDTSKTVLIGTKDTVCA), 698-730 (GATGAINMAKGAAQGGLDTTKSVLMGTKDTVTT), 731-763 (GLTGAINVAKGSAQGGLDTTKSVLIGTKDTVTT), 764-796 (GLTGALNVAKGTVQTGLDTSQRVLTGTKDNVYA), 797-829 (GVTGAVNVAKGTIQGGLDTTKSVVMGTKDTVTT), 830-862 (GLTGAVNVAKGAVQGGLDTTKSVVMGTKDTVTT), 863-895 (GLTGAMNVAKGTAQMGIDTSKTVLTGTKDTVCA), 896-928 (GLTGAINVAKGATQGGLDTTKSVLMGTKDTVTT), 929-961 (GLTGAINVAKGAAQGGLDTTKSVLLGTKDTVTT), 962-994 (GLTGAANVAKETVQMGLDTSKNILMDTKDSICA), 995-1027 (GATGAITVVKGAAQGGLDTSNAALTGTMDTAKG), and 1028-1060 (TVQTSLDTSKHMLIGMKDTVCAGVTSAMNMAKG). The 29 X 33 AA approximate tandem repeat stretch occupies residues 104–1060 (GVFGIMDAAK…VTSAMNMAKG (957 aa)). S1281 carries the phosphoserine modification. T1287 carries the phosphothreonine modification.

It belongs to the perilipin family. As to expression, specifically expressed in white adipose tissue and also weakly detected in heart and skeletal muscle (at protein level).

Its subcellular location is the cell membrane. The protein resides in the cytoplasm. It localises to the lipid droplet. Functionally, may play a role in triacylglycerol packaging into adipocytes. May function as a coat protein involved in the biogenesis of lipid droplets. This is Perilipin-4 (Plin4) from Mus musculus (Mouse).